Consider the following 161-residue polypeptide: Large-conductance mechanosensitive channel (161 aa).

2 helical membrane passes run 14 to 34 and 85 to 105; these read VVDM…VNTL and GLFL…FILV.

It belongs to the MscL family. In terms of assembly, homopentamer.

The protein resides in the cell inner membrane. Its function is as follows. Channel that opens in response to stretch forces in the membrane lipid bilayer. May participate in the regulation of osmotic pressure changes within the cell. This Chlorobium luteolum (strain DSM 273 / BCRC 81028 / 2530) (Pelodictyon luteolum) protein is Large-conductance mechanosensitive channel.